A 177-amino-acid polypeptide reads, in one-letter code: Cell division protein ZapC (177 aa).

This sequence belongs to the ZapC family. In terms of assembly, interacts directly with FtsZ.

Its subcellular location is the cytoplasm. Functionally, contributes to the efficiency of the cell division process by stabilizing the polymeric form of the cell division protein FtsZ. Acts by promoting interactions between FtsZ protofilaments and suppressing the GTPase activity of FtsZ. This is Cell division protein ZapC from Shewanella oneidensis (strain ATCC 700550 / JCM 31522 / CIP 106686 / LMG 19005 / NCIMB 14063 / MR-1).